Reading from the N-terminus, the 163-residue chain is Small ribosomal subunit protein uS5 (163 aa).

One can recognise an S5 DRBM domain in the interval 8–71 (LIEKIVYLNR…EKARKEMISV (64 aa)).

It belongs to the universal ribosomal protein uS5 family. As to quaternary structure, part of the 30S ribosomal subunit. Contacts proteins S4 and S8.

With S4 and S12 plays an important role in translational accuracy. In terms of biological role, located at the back of the 30S subunit body where it stabilizes the conformation of the head with respect to the body. The polypeptide is Small ribosomal subunit protein uS5 (Maridesulfovibrio salexigens (strain ATCC 14822 / DSM 2638 / NCIMB 8403 / VKM B-1763) (Desulfovibrio salexigens)).